The chain runs to 168 residues: GTP-dependent dephospho-CoA kinase (168 aa).

GTP contacts are provided by aspartate 40, valine 41, valine 42, aspartate 59, and glutamate 112.

This sequence belongs to the GTP-dependent DPCK family.

The enzyme catalyses 3'-dephospho-CoA + GTP = GDP + CoA + H(+). The protein operates within cofactor biosynthesis; coenzyme A biosynthesis. Functionally, catalyzes the GTP-dependent phosphorylation of the 3'-hydroxyl group of dephosphocoenzyme A to form coenzyme A (CoA). The sequence is that of GTP-dependent dephospho-CoA kinase from Methanoregula boonei (strain DSM 21154 / JCM 14090 / 6A8).